The primary structure comprises 121 residues: Large ribosomal subunit protein bL12 (121 aa).

It belongs to the bacterial ribosomal protein bL12 family. As to quaternary structure, homodimer. Part of the ribosomal stalk of the 50S ribosomal subunit. Forms a multimeric L10(L12)X complex, where L10 forms an elongated spine to which 2 to 4 L12 dimers bind in a sequential fashion. Binds GTP-bound translation factors.

Functionally, forms part of the ribosomal stalk which helps the ribosome interact with GTP-bound translation factors. Is thus essential for accurate translation. In Oenococcus oeni (strain ATCC BAA-331 / PSU-1), this protein is Large ribosomal subunit protein bL12.